Consider the following 35-residue polypeptide: Photosystem II reaction center protein T (35 aa).

Residues 3-23 traverse the membrane as a helical segment; it reads ALVYTFLLVSTLGIIFFAIFF.

Belongs to the PsbT family. As to quaternary structure, PSII is composed of 1 copy each of membrane proteins PsbA, PsbB, PsbC, PsbD, PsbE, PsbF, PsbH, PsbI, PsbJ, PsbK, PsbL, PsbM, PsbT, PsbY, PsbZ, Psb30/Ycf12, at least 3 peripheral proteins of the oxygen-evolving complex and a large number of cofactors. It forms dimeric complexes.

It localises to the plastid. Its subcellular location is the chloroplast thylakoid membrane. In terms of biological role, found at the monomer-monomer interface of the photosystem II (PS II) dimer, plays a role in assembly and dimerization of PSII. PSII is a light-driven water plastoquinone oxidoreductase, using light energy to abstract electrons from H(2)O, generating a proton gradient subsequently used for ATP formation. In Gunnera chilensis (Chilean rhubarb), this protein is Photosystem II reaction center protein T.